A 149-amino-acid polypeptide reads, in one-letter code: MERTFIMIKPDGVQRGLVGEVIGRFEAKGFTLVGLKLMSVSKELAEEHYDVHKERPFFGSLVEFICSSPVVAMVWEGDGVVASARKLIGATNPLSAEPGTIRGDFGVSVGRNLIHGSDAIETAQREISLWFNEKELSSWEPTAKTWLYE.

ATP is bound by residues Lys-9, Phe-57, Arg-85, Thr-91, Arg-102, and Asn-112. Residue His-115 is the Pros-phosphohistidine intermediate of the active site.

The protein belongs to the NDK family. As to quaternary structure, homotetramer. Requires Mg(2+) as cofactor.

Its subcellular location is the cytoplasm. The enzyme catalyses a 2'-deoxyribonucleoside 5'-diphosphate + ATP = a 2'-deoxyribonucleoside 5'-triphosphate + ADP. It carries out the reaction a ribonucleoside 5'-diphosphate + ATP = a ribonucleoside 5'-triphosphate + ADP. In terms of biological role, major role in the synthesis of nucleoside triphosphates other than ATP. The ATP gamma phosphate is transferred to the NDP beta phosphate via a ping-pong mechanism, using a phosphorylated active-site intermediate. The protein is Nucleoside diphosphate kinase of Crocosphaera subtropica (strain ATCC 51142 / BH68) (Cyanothece sp. (strain ATCC 51142)).